Here is a 443-residue protein sequence, read N- to C-terminus: Sulfoquinovose isomerase (443 aa).

Belongs to the SqvD family.

It catalyses the reaction 6-sulfo-beta-D-quinovose = 6-deoxy-6-sulfo-D-fructose. Functionally, part of the sulfo-EMP2 pathway, a D-sulfoquinovose degradation pathway that produces sulfolactate (SL). Catalyzes the isomerization of sulfoquinovose (SQ) to 6-deoxy-6-sulfo-D-fructose (SF). The sequence is that of Sulfoquinovose isomerase from Alkalicoccus urumqiensis (Bacillus urumqiensis).